We begin with the raw amino-acid sequence, 748 residues long: Choline O-acetyltransferase (748 aa).

Residues methionine 1–glycine 10 are compositionally biased toward basic residues. Residues methionine 1–alanine 89 form a disordered region. Basic and acidic residues predominate over residues tryptophan 17–arginine 32. Residues glycine 40–glycine 53 show a composition bias toward gly residues. 2 stretches are compositionally biased toward low complexity: residues asparagine 54–threonine 65 and histidine 73–alanine 89. Serine 125 bears the Phosphoserine mark. Histidine 442 serves as the catalytic Proton acceptor. The residue at position 473 (serine 473) is a Phosphoserine. Residues glycine 520–aspartate 532, serine 558, and glutamine 659 contribute to the CoA site. The segment at proline 727–proline 748 is disordered.

It belongs to the carnitine/choline acetyltransferase family.

It catalyses the reaction choline + acetyl-CoA = acetylcholine + CoA. Its function is as follows. Catalyzes the reversible synthesis of acetylcholine (ACh) from acetyl CoA and choline at cholinergic synapses. The chain is Choline O-acetyltransferase (CHAT) from Homo sapiens (Human).